The chain runs to 501 residues: LIM domain-containing protein HDR3 (501 aa).

Residues 33 to 67 (GEANRRRPRVTAGEETTLWEEPVRPKKEEPPRHNN) form a disordered region. Positions 53-67 (EPVRPKKEEPPRHNN) are enriched in basic and acidic residues. 2 consecutive UIM domains span residues 65–84 (HNNE…DAKN) and 94–113 (ENDE…NPYQ). The LIM zinc-binding domain maps to 131 to 191 (RVCGGCKHEI…KLCYKELHHP (61 aa)). Residues 429-448 (YASSSSSSCRPPPSKKGGIS) are disordered.

In terms of assembly, interacts (via N-terminus) with GW6A (via C-terminus).

Functionally, ubiquitin receptor that functions as a positive regulator of grain size and weight. Functions in the same genetic pathway as GW6A to regulate grain size. Modulates grain size in a similar manner to GW6A, by altering cell proliferation in spikelet hulls. Interacts with and enhances the ubiquitination of GW6A. This stabilizes GW6A, delays protein degradation by the 26S proteasome and enhances GW6A histone acetyltransferase activity. This Oryza sativa subsp. japonica (Rice) protein is LIM domain-containing protein HDR3.